The following is a 248-amino-acid chain: tRNA (guanine-N(1)-)-methyltransferase (248 aa).

S-adenosyl-L-methionine contacts are provided by residues glycine 113 and 133–138 (IGDYVL).

The protein belongs to the RNA methyltransferase TrmD family. In terms of assembly, homodimer.

It is found in the cytoplasm. The enzyme catalyses guanosine(37) in tRNA + S-adenosyl-L-methionine = N(1)-methylguanosine(37) in tRNA + S-adenosyl-L-homocysteine + H(+). Functionally, specifically methylates guanosine-37 in various tRNAs. In Shewanella baltica (strain OS223), this protein is tRNA (guanine-N(1)-)-methyltransferase.